A 251-amino-acid chain; its full sequence is Ubiquinone/menaquinone biosynthesis C-methyltransferase UbiE (251 aa).

Residues Thr-74, Asp-95, and 123 to 124 (NA) each bind S-adenosyl-L-methionine.

Belongs to the class I-like SAM-binding methyltransferase superfamily. MenG/UbiE family.

It catalyses the reaction a 2-demethylmenaquinol + S-adenosyl-L-methionine = a menaquinol + S-adenosyl-L-homocysteine + H(+). It carries out the reaction a 2-methoxy-6-(all-trans-polyprenyl)benzene-1,4-diol + S-adenosyl-L-methionine = a 5-methoxy-2-methyl-3-(all-trans-polyprenyl)benzene-1,4-diol + S-adenosyl-L-homocysteine + H(+). The protein operates within quinol/quinone metabolism; menaquinone biosynthesis; menaquinol from 1,4-dihydroxy-2-naphthoate: step 2/2. It functions in the pathway cofactor biosynthesis; ubiquinone biosynthesis. Its function is as follows. Methyltransferase required for the conversion of demethylmenaquinol (DMKH2) to menaquinol (MKH2) and the conversion of 2-polyprenyl-6-methoxy-1,4-benzoquinol (DDMQH2) to 2-polyprenyl-3-methyl-6-methoxy-1,4-benzoquinol (DMQH2). The sequence is that of Ubiquinone/menaquinone biosynthesis C-methyltransferase UbiE from Shewanella woodyi (strain ATCC 51908 / MS32).